A 530-amino-acid chain; its full sequence is Per os infectivity factor 1 (530 aa).

Residues 1–15 form the signal peptide; it reads MHFAIILLFLLVIIA.

As to quaternary structure, forms the PIF complex together with PIF2 and PIF3. The complex also interacts with per os infectivity factor PIF0.

It localises to the virion membrane. Its function is as follows. Per os infectivity factor that mediates the specific binding of occluded virions (ODV) to the host midgut target cells. In Autographa californica nuclear polyhedrosis virus (AcMNPV), this protein is Per os infectivity factor 1.